The following is a 171-amino-acid chain: Ribosome maturation factor RimP (171 aa).

This sequence belongs to the RimP family.

The protein localises to the cytoplasm. Its function is as follows. Required for maturation of 30S ribosomal subunits. The polypeptide is Ribosome maturation factor RimP (Oleidesulfovibrio alaskensis (strain ATCC BAA-1058 / DSM 17464 / G20) (Desulfovibrio alaskensis)).